The sequence spans 89 residues: Submaxillary mucin (89 aa).

Residues 1-89 (AGSVGRTAGG…VGGSPVATTL (89 aa)) are disordered. O-linked (GalNAc...) serine; partial glycosylation occurs at S3. 2 O-linked (GalNAc...) threonine; partial glycosylation sites follow: T7 and T14. O-linked (GalNAc...) serine; partial glycosylation occurs at S15. A glycan (O-linked (GalNAc...) threonine; partial) is linked at T23. S25 carries an O-linked (GalNAc...) serine; partial glycan. A glycan (O-linked (GalNAc...) threonine; partial) is linked at T27. O-linked (GalNAc...) serine; partial glycosylation occurs at S29. O-linked (GalNAc...) threonine; partial glycosylation is present at T34. The O-linked (GalNAc...) serine; partial glycan is linked to S38. A glycan (O-linked (GalNAc...) threonine; partial) is linked at T42. S47 and S49 each carry an O-linked (GalNAc...) serine; partial glycan. A glycan (O-linked (GalNAc...) threonine; partial) is linked at T50. Residue S54 is glycosylated (O-linked (GalNAc...) serine; partial). Low complexity predominate over residues 56 to 71 (APGTTLAGRAGTTLGP). Residues T59, T60, T67, and T68 are each glycosylated (O-linked (GalNAc...) threonine; partial). O-linked (GalNAc...) serine; partial glycans are attached at residues S73 and S76. T78 is a glycosylation site (O-linked (GalNAc...) threonine; partial). An O-linked (GalNAc...) serine; partial glycan is attached at S83.

Heavily O-glycosylated at most but not all Ser and Thr residues. Expressed in the submaxillary salivary gland.

Its subcellular location is the secreted. The sequence is that of Submaxillary mucin from Canis lupus familiaris (Dog).